A 496-amino-acid polypeptide reads, in one-letter code: Cobyric acid synthase (496 aa).

One can recognise a GATase cobBQ-type domain in the interval aspartate 252 to tyrosine 442. Cysteine 333 functions as the Nucleophile in the catalytic mechanism. Histidine 434 is a catalytic residue.

The protein belongs to the CobB/CobQ family. CobQ subfamily.

It functions in the pathway cofactor biosynthesis; adenosylcobalamin biosynthesis. Its function is as follows. Catalyzes amidations at positions B, D, E, and G on adenosylcobyrinic A,C-diamide. NH(2) groups are provided by glutamine, and one molecule of ATP is hydrogenolyzed for each amidation. In Desulforudis audaxviator (strain MP104C), this protein is Cobyric acid synthase.